A 1014-amino-acid chain; its full sequence is DNA translocase FtsK 2 (1014 aa).

Residues 1-21 form a helical membrane-spanning segment; the sequence is MFWIVLIVILLLALAGLFFVR. Disordered stretches follow at residues 89-142, 283-318, and 487-525; these read ESEP…EDIA, RHAGQGKGQAEAKSPDVSQGQSVSDGTAVRDARRRV, and SQAVCPFENVPSERPSRRASDTEADEGAFQSEETGAVSE. The segment covering 121-140 has biased composition (acidic residues); sequence EEAETEEAEAAEEEAADTED. Positions 298–307 are enriched in polar residues; sequence DVSQGQSVSD. One can recognise a FtsK domain in the interval 662–871; the sequence is GQPVVTDLGK…FQVSSKIDSR (210 aa). Residue 682–687 coordinates ATP; the sequence is GSGKSV.

The protein belongs to the FtsK/SpoIIIE/SftA family. As to quaternary structure, homohexamer. Forms a ring that surrounds DNA.

The protein resides in the cell inner membrane. In terms of biological role, essential cell division protein that coordinates cell division and chromosome segregation. The N-terminus is involved in assembly of the cell-division machinery. The C-terminus functions as a DNA motor that moves dsDNA in an ATP-dependent manner towards the dif recombination site, which is located within the replication terminus region. Translocation stops specifically at Xer-dif sites, where FtsK interacts with the Xer recombinase, allowing activation of chromosome unlinking by recombination. FtsK orienting polar sequences (KOPS) guide the direction of DNA translocation. FtsK can remove proteins from DNA as it translocates, but translocation stops specifically at XerCD-dif site, thereby preventing removal of XerC and XerD from dif. This chain is DNA translocase FtsK 2 (ftsK2), found in Neisseria meningitidis serogroup A / serotype 4A (strain DSM 15465 / Z2491).